Here is a 477-residue protein sequence, read N- to C-terminus: Bifunctional protein HldE (477 aa).

The segment at Met-1–Thr-318 is ribokinase. Asn-195–Glu-198 is a binding site for ATP. Asp-264 is a catalytic residue. Positions Met-344–Lys-477 are cytidylyltransferase.

In the N-terminal section; belongs to the carbohydrate kinase PfkB family. The protein in the C-terminal section; belongs to the cytidylyltransferase family. As to quaternary structure, homodimer.

It catalyses the reaction D-glycero-beta-D-manno-heptose 7-phosphate + ATP = D-glycero-beta-D-manno-heptose 1,7-bisphosphate + ADP + H(+). The catalysed reaction is D-glycero-beta-D-manno-heptose 1-phosphate + ATP + H(+) = ADP-D-glycero-beta-D-manno-heptose + diphosphate. It functions in the pathway nucleotide-sugar biosynthesis; ADP-L-glycero-beta-D-manno-heptose biosynthesis; ADP-L-glycero-beta-D-manno-heptose from D-glycero-beta-D-manno-heptose 7-phosphate: step 1/4. The protein operates within nucleotide-sugar biosynthesis; ADP-L-glycero-beta-D-manno-heptose biosynthesis; ADP-L-glycero-beta-D-manno-heptose from D-glycero-beta-D-manno-heptose 7-phosphate: step 3/4. Functionally, catalyzes the phosphorylation of D-glycero-D-manno-heptose 7-phosphate at the C-1 position to selectively form D-glycero-beta-D-manno-heptose-1,7-bisphosphate. Its function is as follows. Catalyzes the ADP transfer from ATP to D-glycero-beta-D-manno-heptose 1-phosphate, yielding ADP-D-glycero-beta-D-manno-heptose. In Salmonella dublin (strain CT_02021853), this protein is Bifunctional protein HldE.